The sequence spans 492 residues: Bifunctional purine biosynthesis protein PurH (492 aa).

Positions 1-144 (MKKAILSVSN…KNYKHVTTIV (144 aa)) constitute an MGS-like domain.

The protein belongs to the PurH family.

It catalyses the reaction (6R)-10-formyltetrahydrofolate + 5-amino-1-(5-phospho-beta-D-ribosyl)imidazole-4-carboxamide = 5-formamido-1-(5-phospho-D-ribosyl)imidazole-4-carboxamide + (6S)-5,6,7,8-tetrahydrofolate. It carries out the reaction IMP + H2O = 5-formamido-1-(5-phospho-D-ribosyl)imidazole-4-carboxamide. It participates in purine metabolism; IMP biosynthesis via de novo pathway; 5-formamido-1-(5-phospho-D-ribosyl)imidazole-4-carboxamide from 5-amino-1-(5-phospho-D-ribosyl)imidazole-4-carboxamide (10-formyl THF route): step 1/1. The protein operates within purine metabolism; IMP biosynthesis via de novo pathway; IMP from 5-formamido-1-(5-phospho-D-ribosyl)imidazole-4-carboxamide: step 1/1. This chain is Bifunctional purine biosynthesis protein PurH, found in Staphylococcus aureus (strain USA300).